Here is a 449-residue protein sequence, read N- to C-terminus: Telomere resolvase ResT (449 aa).

The cofactor is No cofactors were found to be necessary..

The protein localises to the cytoplasm. It is found in the nucleoid. In terms of biological role, catalyzes the conservative, sequence-specific DNA breakage and reunion reaction that generates two hairpin telomeres from a replicated telomere substrate. Breaks two phosphodiester bonds in a single DNA duplex and joins each end with the opposite DNA strand to form covalently closed hairpin telomeres. In vitro relaxed-circular, open-circular and linearized plasmids, but not supercoiled DNA, are all substrates. Cleavage is position-dependent relative to conserved sequence elements. The polypeptide is Telomere resolvase ResT (Borreliella burgdorferi (strain ATCC 35210 / DSM 4680 / CIP 102532 / B31) (Borrelia burgdorferi)).